Consider the following 134-residue polypeptide: Phosphoribosyl-AMP cyclohydrolase (134 aa).

A Mg(2+)-binding site is contributed by Asp78. Zn(2+) is bound at residue Cys79. Mg(2+)-binding residues include Asp80 and Asp82. 2 residues coordinate Zn(2+): Cys96 and Cys103.

Belongs to the PRA-CH family. As to quaternary structure, homodimer. Mg(2+) serves as cofactor. The cofactor is Zn(2+).

The protein resides in the cytoplasm. It catalyses the reaction 1-(5-phospho-beta-D-ribosyl)-5'-AMP + H2O = 1-(5-phospho-beta-D-ribosyl)-5-[(5-phospho-beta-D-ribosylamino)methylideneamino]imidazole-4-carboxamide. It participates in amino-acid biosynthesis; L-histidine biosynthesis; L-histidine from 5-phospho-alpha-D-ribose 1-diphosphate: step 3/9. In terms of biological role, catalyzes the hydrolysis of the adenine ring of phosphoribosyl-AMP. The protein is Phosphoribosyl-AMP cyclohydrolase of Cupriavidus necator (strain ATCC 17699 / DSM 428 / KCTC 22496 / NCIMB 10442 / H16 / Stanier 337) (Ralstonia eutropha).